Consider the following 233-residue polypeptide: Large ribosomal subunit protein uL1 (233 aa).

This sequence belongs to the universal ribosomal protein uL1 family. In terms of assembly, part of the 50S ribosomal subunit.

Functionally, binds directly to 23S rRNA. The L1 stalk is quite mobile in the ribosome, and is involved in E site tRNA release. In terms of biological role, protein L1 is also a translational repressor protein, it controls the translation of the L11 operon by binding to its mRNA. The sequence is that of Large ribosomal subunit protein uL1 from Deinococcus geothermalis (strain DSM 11300 / CIP 105573 / AG-3a).